The chain runs to 190 residues: UPF0340 protein BCE33L5016 (190 aa).

The protein belongs to the UPF0340 family.

This chain is UPF0340 protein BCE33L5016, found in Bacillus cereus (strain ZK / E33L).